A 1394-amino-acid chain; its full sequence is Cyclic nucleotide-gated channel beta-1 (1394 aa).

Disordered regions lie at residues 1 to 95, 112 to 253, and 271 to 675; these read MLGW…AHSS, VPQP…QDSA, and VIRG…SQNS. The Cytoplasmic segment spans residues 1-762; the sequence is MLGWVQRVLP…WKKYQFPQSI (762 aa). Composition is skewed to polar residues over residues 68-86 and 116-125; these read PQGT…QAQV and AHSSRPSQNI. Composition is skewed to basic and acidic residues over residues 300-312 and 336-355; these read EESH…VDPH and DEEK…RIQE. Acidic residues predominate over residues 356–387; it reads EKEDEEEEKEDGEEEEEEGREKEEEEGEEKEE. Positions 388 to 408 are enriched in basic and acidic residues; that stretch reads EEGREKEEEEGEKKEEEGREK. Acidic residues predominate over residues 409–418; it reads EEEEGGEKED. Over residues 419-433 the composition is skewed to basic and acidic residues; sequence EEGREKEEEEGRGKE. Composition is skewed to acidic residues over residues 452–464 and 481–490; these read EGRE…EEEQ and DRSEESETQD. Composition is skewed to low complexity over residues 493 to 508 and 529 to 554; these read EVGG…GAQA and EVGG…AQDQ. The span at 654-675 shows a compositional bias: polar residues; it reads DPTSPQGTDDQDRATSTASQNS. Residues 671–681 form a calmodulin-binding CaM1 region; sequence ASQNSAIINDR. The IQ-like signature appears at 682–692; sequence LQELVKLFKER. Residues 699–732 are disordered; sequence KLIDPDVTSDEESPKPSPAKKAPEPAPEVKPAEA. The helical transmembrane segment at 763 to 793 threads the bilayer; the sequence is DPLTNLMYILWLFFVVLAWNWNCWLIPVRWA. Over 794–798 the chain is Extracellular; sequence FPYQT. The helical transmembrane segment at 799-825 threads the bilayer; it reads PDNIHLWLLMDYLCDLIYLLDITVFQM. The Cytoplasmic portion of the chain corresponds to 826 to 837; it reads RLQFVRGGDIIT. A helical membrane pass occupies residues 838 to 861; the sequence is DKKEMRNNYVKSQRFKMDMLCLLP. Residues 862 to 872 lie on the Extracellular side of the membrane; sequence LDLLYLKFGVN. The helical transmembrane segment at 873-887 threads the bilayer; that stretch reads PLLRLPRCLKYMAFF. Residues 888-900 are Cytoplasmic-facing; that stretch reads EFNNRLESILSKA. The interval 900 to 999 is ion conduction pathway; that stretch reads AYVYRVIRTT…IGQMRDVVGA (100 aa). Residues 901 to 922 form a helical membrane-spanning segment; that stretch reads YVYRVIRTTAYLLYSLHLNSCL. The Extracellular segment spans residues 923–931; the sequence is YYWASAYEG. The next 2 membrane-spanning stretches (helical) occupy residues 932–974 and 975–1002; these read LGST…EIVF and QGLN…AATA. The segment at 959-962 is selectivity filter; it reads TIGG. Over 1003–1394 the chain is Cytoplasmic; sequence GQTYYRSCMD…EEARKEKEEE (392 aa). The interval 1082–1198 is cyclic nucleotide-binding domain; that stretch reads RQMIFDMLKR…LLRKKARRML (117 aa). Positions 1143, 1144, 1146, 1156, and 1157 each coordinate 3',5'-cyclic GMP. R1156 contacts 3',5'-cyclic AMP. Positions 1261 to 1267 are calmodulin-binding CaM2; sequence QQQLLEQ. A disordered region spans residues 1265-1394; the sequence is LEQAKSSEDA…EEARKEKEEE (130 aa). Pro residues predominate over residues 1285–1326; the sequence is EQPPRPEPPAPEAPAPEPTAPEPLAPEAPAPEAPAPSSPPPA. Basic and acidic residues-rich tracts occupy residues 1329-1345 and 1364-1376; these read ERPE…EHPV and VPEK…KKEE.

The protein belongs to the cyclic nucleotide-gated cation channel (TC 1.A.1.5) family. CNGB1 subfamily. In terms of assembly, the rod cyclic nucleotide-gated channel is a heterotetramer composed of CNGA1 and CNGB1 subunits with 3:1 stoichiometry. CNGA1:CNGB1 channel binds Ca(2+)-bound CALM1 via CaM1 and CaM2 regions of the CNGB1 subunit; this interaction modulates the affinity of the channel for cNMPs in response to intracellular Ca(2+) levels. The olfactory cyclic nucleotide-gated channel is a heterotetramer composed of CNGA2, CNGA4 and CNGB1 subunits with 2:1:1 stoichiometry. As to expression, retina, testis, kidney, heart and brain.

It localises to the membrane. The enzyme catalyses Ca(2+)(in) = Ca(2+)(out). The catalysed reaction is Na(+)(in) = Na(+)(out). It catalyses the reaction K(+)(in) = K(+)(out). It carries out the reaction NH4(+)(in) = NH4(+)(out). The enzyme catalyses Rb(+)(in) = Rb(+)(out). The catalysed reaction is Li(+)(in) = Li(+)(out). It catalyses the reaction Cs(+)(in) = Cs(+)(out). In terms of biological role, pore-forming subunit of the rod cyclic nucleotide-gated channel. Mediates rod photoresponses at dim light converting transient changes in intracellular cGMP levels into electrical signals. In the dark, cGMP levels are high and keep the channel open enabling a steady inward current carried by Na(+) and Ca(2+) ions that leads to membrane depolarization and neurotransmitter release from synaptic terminals. Upon photon absorption cGMP levels decline leading to channel closure and membrane hyperpolarization that ultimately slows neurotransmitter release and signals the presence of light, the end point of the phototransduction cascade. Pore-forming subunit of the olfactory cyclic nucleotide-gated channel. Operates in the cilia of olfactory sensory neurons where chemical stimulation of the odorant is converted to an electrical signal. Mediates odorant-induced cAMP-dependent Ca(2+) influx triggering neuron depolarization. The rise of intracellular Ca(2+) levels potentiates the olfactory response by activating Ca(2+)-dependent Cl(-) channels, but it also serves as a negative feedback signal to desensitize the channel for rapid adaptation to odorants. Conducts cGMP- and cAMP-gated ion currents, with permeability for monovalent and divalent cations. The selectivity for Ca(2+) over Na(+) increases with cGMP concentrations, whereas the selectivity among monovalent ions is independent of the cGMP levels. The protein is Cyclic nucleotide-gated channel beta-1 of Bos taurus (Bovine).